The sequence spans 252 residues: Probable endonuclease 4 (252 aa).

Positions 56, 96, 129, 162, 165, 191, 204, 206, and 233 each coordinate Zn(2+).

This sequence belongs to the AP endonuclease 2 family. Zn(2+) serves as cofactor.

It carries out the reaction Endonucleolytic cleavage to 5'-phosphooligonucleotide end-products.. Functionally, endonuclease IV plays a role in DNA repair. It cleaves phosphodiester bonds at apurinic or apyrimidinic (AP) sites, generating a 3'-hydroxyl group and a 5'-terminal sugar phosphate. The sequence is that of Probable endonuclease 4 from Mycobacterium ulcerans (strain Agy99).